The primary structure comprises 137 residues: Transcription antitermination protein NusB (137 aa).

The protein belongs to the NusB family.

Involved in transcription antitermination. Required for transcription of ribosomal RNA (rRNA) genes. Binds specifically to the boxA antiterminator sequence of the ribosomal RNA (rrn) operons. In Aeromonas hydrophila subsp. hydrophila (strain ATCC 7966 / DSM 30187 / BCRC 13018 / CCUG 14551 / JCM 1027 / KCTC 2358 / NCIMB 9240 / NCTC 8049), this protein is Transcription antitermination protein NusB.